Reading from the N-terminus, the 133-residue chain is CDGSH iron-sulfur domain-containing protein 2 homolog (133 aa).

The Lumenal segment spans residues Met1–Asp35. Residues Trp36–Tyr58 traverse the membrane as a helical segment. Residues Pro59–Lys133 are Cytoplasmic-facing. The [2Fe-2S] cluster site is built by Cys99, Cys101, Cys110, and His114.

This sequence belongs to the CISD protein family. CISD2 subfamily. Requires [2Fe-2S] cluster as cofactor.

It is found in the endoplasmic reticulum membrane. This Drosophila virilis (Fruit fly) protein is CDGSH iron-sulfur domain-containing protein 2 homolog.